We begin with the raw amino-acid sequence, 348 residues long: MFKMVSSPHTHGTNLTAKFMLWVIVAMLPALIVQIAFFGTGVVIQLAIALSMAIVIEIVVAKLRHKSTTFYLADLAGVVTATILAMAIPPYAPYWVVMIGMIVALLLAKHCYGGLGQNLFNPAMVAYAFLLISFPVQMTSWLPSFELLAEPPTFKDAWLLIFKGVTSDGFTSRQLLSGIDGIAQATPLDSAKTSIAKLGFDGVIQSPIFSGIFARGWLQLNLAFLAGGLFLLYKRIIHWQIPVAMLVVFSVLSALTDLVTMHTHLNVLSQLFSGAMMFGAFFIATDPVSASITPKGKLIFGGLIGLLAYLIRYYGSYPDAIAFAVLLANLCVPLIDHYTQPRLYGTHK.

Transmembrane regions (helical) follow at residues 19 to 39 (FMLWVIVAMLPALIVQIAFFG), 41 to 61 (GVVIQLAIALSMAIVIEIVVA), 66 to 86 (KSTTFYLADLAGVVTATILAM), 87 to 107 (AIPPYAPYWVVMIGMIVALLL), and 122 to 142 (PAMVAYAFLLISFPVQMTSWL). An FMN phosphoryl threonine modification is found at Thr-186. 5 helical membrane passes run 212–232 (IFARGWLQLNLAFLAGGLFLL), 236–256 (IIHWQIPVAMLVVFSVLSALT), 265–285 (LNVLSQLFSGAMMFGAFFIAT), 291–311 (SITPKGKLIFGGLIGLLAYLI), and 315–335 (GSYPDAIAFAVLLANLCVPLI).

This sequence belongs to the NqrB/RnfD family. In terms of assembly, the complex is composed of six subunits: RnfA, RnfB, RnfC, RnfD, RnfE and RnfG. FMN serves as cofactor.

It localises to the cell inner membrane. In terms of biological role, part of a membrane-bound complex that couples electron transfer with translocation of ions across the membrane. The protein is Ion-translocating oxidoreductase complex subunit D of Haemophilus ducreyi (strain 35000HP / ATCC 700724).